The sequence spans 362 residues: Chemerin-like receptor 1 (362 aa).

Topologically, residues 1 to 37 (MEAEDYNASYEDYPDDVDPIVVLEELSPLEGRVVRIL) are extracellular. An N-linked (GlcNAc...) asparagine glycan is attached at Asn-7. A helical membrane pass occupies residues 38–58 (LVAVYSVICLLGILGNGLVIV). Residues 59-70 (MITCKMKRTVNT) are Cytoplasmic-facing. The chain crosses the membrane as a helical span at residues 71-91 (VWFLNLAVADFLFNVFLPVHI). The Extracellular portion of the chain corresponds to 92–108 (AYAALDYHWVFGTAMCK). Cysteines 107 and 184 form a disulfide. The helical transmembrane segment at 109 to 129 (ISNFLLIHNMFTSVFLLTVIS) threads the bilayer. At 130 to 151 (FDRCVSVLLPVWSQNHRSVRLA) the chain is on the cytoplasmic side. The chain crosses the membrane as a helical span at residues 152–172 (YTACLVIWVLAFFLSSPSLVF). Residues 173-219 (RDTARLHGKISCFNNFSLSAAVSSPWPAHPQVDPVGSGRHKVVTITR) lie on the Extracellular side of the membrane. Asn-187 carries an N-linked (GlcNAc...) asparagine glycan. The helical transmembrane segment at 220–240 (FLCGFLVPGLITTACYLTIVY) threads the bilayer. Over 241-255 (KLQRSRLAKTKKPFK) the chain is Cytoplasmic. The helical transmembrane segment at 256 to 276 (IILTIIVTFFLCWCPYHAFYL) threads the bilayer. Over 277–281 (LELRR) the chain is Extracellular. Residues 282-302 (GSVPPSVFSLGVPLATAIAIA) form a helical membrane-spanning segment. At 303 to 362 (NSCMNPILYVFMGQDFKKFRVALFSRLVNALSEDTGHSSYPSHRSFTKMSSMNERETGML) the chain is on the cytoplasmic side. Position 334 is a phosphoserine (Ser-334). The disordered stretch occupies residues 336-362 (DTGHSSYPSHRSFTKMSSMNERETGML). Position 337 is a phosphothreonine (Thr-337). Positions 339-354 (HSSYPSHRSFTKMSSM) are enriched in polar residues. A phosphoserine mark is found at Ser-344, Ser-347, and Ser-353.

It belongs to the chemokine-like receptor (CMKLR) family. As to expression, widely expressed in several tissues including adipose, muscle, liver and brain.

The protein localises to the cell membrane. In terms of biological role, receptor for the chemoattractant adipokine chemerin/RARRES2 and for the omega-3 fatty acid derived molecule resolvin E1. Interaction with RARRES2 initiates activation of G proteins G(i)/G(o) and beta-arrestin pathways inducing cellular responses via second messenger pathways such as intracellular calcium mobilization, phosphorylation of MAP kinases MAPK1/MAPK3 (ERK1/2), TYRO3, MAPK14/P38MAPK and PI3K leading to multifunctional effects, like, reduction of immune responses, enhancing of adipogenesis and angionesis. Resolvin E1 down-regulates cytokine production in macrophages by reducing the activation of MAPK1/3 (ERK1/2) and NF-kappa-B. Positively regulates adipogenesis and adipocyte metabolism. The chain is Chemerin-like receptor 1 (CMLKR1) from Bos taurus (Bovine).